A 468-amino-acid chain; its full sequence is Glycine--tRNA ligase (468 aa).

Residues R101 and E170 each contribute to the substrate site. ATP contacts are provided by residues 202 to 204, 212 to 217, 289 to 290, and 333 to 336; these read RNE, FRTREF, EL, and GLTR. 217–221 is a binding site for substrate; that stretch reads FEQME. Residue 329 to 333 participates in substrate binding; it reads EPAAG.

This sequence belongs to the class-II aminoacyl-tRNA synthetase family. As to quaternary structure, homodimer.

The protein resides in the cytoplasm. The catalysed reaction is tRNA(Gly) + glycine + ATP = glycyl-tRNA(Gly) + AMP + diphosphate. In terms of biological role, catalyzes the attachment of glycine to tRNA(Gly). In Mycolicibacterium vanbaalenii (strain DSM 7251 / JCM 13017 / BCRC 16820 / KCTC 9966 / NRRL B-24157 / PYR-1) (Mycobacterium vanbaalenii), this protein is Glycine--tRNA ligase.